A 477-amino-acid polypeptide reads, in one-letter code: Aspartyl/glutamyl-tRNA(Asn/Gln) amidotransferase subunit B (477 aa).

It belongs to the GatB/GatE family. GatB subfamily. Heterotrimer of A, B and C subunits.

It catalyses the reaction L-glutamyl-tRNA(Gln) + L-glutamine + ATP + H2O = L-glutaminyl-tRNA(Gln) + L-glutamate + ADP + phosphate + H(+). It carries out the reaction L-aspartyl-tRNA(Asn) + L-glutamine + ATP + H2O = L-asparaginyl-tRNA(Asn) + L-glutamate + ADP + phosphate + 2 H(+). Allows the formation of correctly charged Asn-tRNA(Asn) or Gln-tRNA(Gln) through the transamidation of misacylated Asp-tRNA(Asn) or Glu-tRNA(Gln) in organisms which lack either or both of asparaginyl-tRNA or glutaminyl-tRNA synthetases. The reaction takes place in the presence of glutamine and ATP through an activated phospho-Asp-tRNA(Asn) or phospho-Glu-tRNA(Gln). The chain is Aspartyl/glutamyl-tRNA(Asn/Gln) amidotransferase subunit B from Sulfurovum sp. (strain NBC37-1).